Consider the following 241-residue polypeptide: Cell division cycle-associated protein 4 (241 aa).

The region spanning 30–77 (YSLQRQSLLDMSLVKLQLCHMLVEPNLCRSVLIANTVRQIQEEMTQDG) is the SERTA domain.

In terms of tissue distribution, highest levels of expression in the pancreas, thymus, testis, spleen, liver, placenta and leukocytes. Relatively low levels in the lung, kidney, prostate, ovary, small intestine and colon. Hardly detectable, if at all, in the brain, skeletal muscle and heart.

It is found in the nucleus. Functionally, may participate in the regulation of cell proliferation through the E2F/RB pathway. May be involved in molecular regulation of hematopoietic stem cells and progenitor cell lineage commitment and differentiation. The sequence is that of Cell division cycle-associated protein 4 (CDCA4) from Homo sapiens (Human).